Reading from the N-terminus, the 1485-residue chain is Chromosome partition protein MukB (1485 aa).

Residue 34–41 coordinates ATP; the sequence is GGNGAGKS. Coiled coils occupy residues 337 to 480, 509 to 605, 780 to 805, 835 to 915, 977 to 1116, and 1210 to 1235; these read LNLV…QAYQ, QHLA…PVWL, RAAR…ATLS, EAEI…IQQH, GMLT…AKAG, and EAIE…KLAI. Residues 666 to 783 are flexible hinge; it reads PSGAEDARLI…EVPLFGRAAR (118 aa).

This sequence belongs to the SMC family. MukB subfamily. In terms of assembly, homodimerization via its hinge domain. Binds to DNA via its C-terminal region. Interacts, and probably forms a ternary complex, with MukE and MukF via its C-terminal region. The complex formation is stimulated by calcium or magnesium. Interacts with tubulin-related protein FtsZ.

The protein localises to the cytoplasm. It is found in the nucleoid. Functionally, plays a central role in chromosome condensation, segregation and cell cycle progression. Functions as a homodimer, which is essential for chromosome partition. Involved in negative DNA supercoiling in vivo, and by this means organize and compact chromosomes. May achieve or facilitate chromosome segregation by condensation DNA from both sides of a centrally located replisome during cell division. The protein is Chromosome partition protein MukB of Yersinia pseudotuberculosis serotype O:1b (strain IP 31758).